Reading from the N-terminus, the 492-residue chain is Protein adenylyltransferase Fic (492 aa).

A compositionally biased stretch (low complexity) spans 1–17 (MCTEAEQPSPPAQQQEQ). The segment at 1 to 25 (MCTEAEQPSPPAQQQEQGNPPLCKA) is disordered. The helical transmembrane segment at 33 to 55 (LYRLVLLFVAGSLAAWTFHALSS) threads the bilayer. 2 TPR repeats span residues 118–151 (ALGA…APRH) and 152–186 (PEVL…SPSN). Residues 243–248 (SVGIEG) carry the Inhibitory (S/T)XXXE(G/N) motif motif. Residues Glu247 and 328 to 331 (VGGH) contribute to the ATP site. The 136-residue stretch at 297 to 432 (ITIKDILELH…IRPFVRFIAD (136 aa)) folds into the Fido domain. The active site involves His375. ATP contacts are provided by residues 379 to 386 (DGNGRTSR), 411 to 412 (YY), and Asn419.

Belongs to the fic family. Homodimer.

It is found in the membrane. The catalysed reaction is L-tyrosyl-[protein] + ATP = O-(5'-adenylyl)-L-tyrosyl-[protein] + diphosphate. It carries out the reaction L-threonyl-[protein] + ATP = 3-O-(5'-adenylyl)-L-threonyl-[protein] + diphosphate. The enzyme catalyses 3-O-(5'-adenylyl)-L-threonyl-[protein] + H2O = L-threonyl-[protein] + AMP + H(+). The side chain of Glu-247 determines which of the two opposing activities (AMPylase or de-AMPylase) will take place. In response to endoplasmic reticulum stress, mediates de-AMPylase activity. Adenylyltransferase activity is inhibited by the inhibitory helix present at the N-terminus: Glu-247 binds ATP and competes with ATP-binding at Arg-386, thereby preventing adenylyltransferase activity. In unstressed cells, disengagement of Glu-247 promotes adenylyltransferase activity. Activation dissociates ATP-binding from Glu-247, allowing ordered binding of the entire ATP moiety with the alpha-phosphate in an orientation that is productive for accepting an incoming target hydroxyl side chain. In terms of biological role, protein that can both mediate the addition of adenosine 5'-monophosphate (AMP) to specific residues of target proteins (AMPylation), and the removal of the same modification from target proteins (de-AMPylation), depending on the context. The side chain of Glu-247 determines which of the two opposing activities (AMPylase or de-AMPylase) will take place. Acts as a key regulator of the unfolded protein response (UPR) by mediating AMPylation or de-AMPylation of Hsc70-3/BiP. In unstressed cells, acts as an adenylyltransferase by mediating AMPylation of Hsc70-3/BiP at 'Thr-518', thereby inactivating it. In response to endoplasmic reticulum stress, acts as a phosphodiesterase by mediating removal of ATP (de-AMPylation) from Hsc70-3/BiP at 'Thr-518', leading to restore HSPA5/BiP activity. In Drosophila sechellia (Fruit fly), this protein is Protein adenylyltransferase Fic.